A 447-amino-acid chain; its full sequence is Glutamyl-tRNA(Gln) amidotransferase subunit A (447 aa).

Residues lysine 51 and serine 126 each act as charge relay system in the active site. The active-site Acyl-ester intermediate is the serine 150.

Belongs to the amidase family. GatA subfamily. As to quaternary structure, heterotrimer of A, B and C subunits.

The enzyme catalyses L-glutamyl-tRNA(Gln) + L-glutamine + ATP + H2O = L-glutaminyl-tRNA(Gln) + L-glutamate + ADP + phosphate + H(+). In terms of biological role, allows the formation of correctly charged Gln-tRNA(Gln) through the transamidation of misacylated Glu-tRNA(Gln) in organisms which lack glutaminyl-tRNA synthetase. The reaction takes place in the presence of glutamine and ATP through an activated gamma-phospho-Glu-tRNA(Gln). The protein is Glutamyl-tRNA(Gln) amidotransferase subunit A of Helicobacter hepaticus (strain ATCC 51449 / 3B1).